The chain runs to 319 residues: tRNA uridine(34) hydroxylase (319 aa).

Residues 125 to 219 (LDENTVVIDA…YGKDPEVQGD (95 aa)) enclose the Rhodanese domain. Residue Cys-179 is the Cysteine persulfide intermediate of the active site.

This sequence belongs to the TrhO family.

It carries out the reaction uridine(34) in tRNA + AH2 + O2 = 5-hydroxyuridine(34) in tRNA + A + H2O. Catalyzes oxygen-dependent 5-hydroxyuridine (ho5U) modification at position 34 in tRNAs. The sequence is that of tRNA uridine(34) hydroxylase from Lactococcus lactis subsp. lactis (strain IL1403) (Streptococcus lactis).